The following is a 309-amino-acid chain: UDP-N-acetylenolpyruvoylglucosamine reductase (309 aa).

Positions 33–195 (VGGQAETLFR…VRARLRTRPG (163 aa)) constitute an FAD-binding PCMH-type domain. Arg-175 is a catalytic residue. The active-site Proton donor is the Ser-224. Glu-294 is an active-site residue.

This sequence belongs to the MurB family. It depends on FAD as a cofactor.

The protein localises to the cytoplasm. It carries out the reaction UDP-N-acetyl-alpha-D-muramate + NADP(+) = UDP-N-acetyl-3-O-(1-carboxyvinyl)-alpha-D-glucosamine + NADPH + H(+). It participates in cell wall biogenesis; peptidoglycan biosynthesis. Its function is as follows. Cell wall formation. This Granulibacter bethesdensis (strain ATCC BAA-1260 / CGDNIH1) protein is UDP-N-acetylenolpyruvoylglucosamine reductase.